The sequence spans 377 residues: EPS I polysaccharide export outer membrane protein EpsA (377 aa).

The first 23 residues, 1 to 23 (MFVSIPSIRKTVMSLCAVPLMAA), serve as a signal peptide directing secretion. The N-palmitoyl cysteine moiety is linked to residue Cys24. The S-diacylglycerol cysteine moiety is linked to residue Cys24.

This sequence belongs to the BexD/CtrA/VexA family.

The protein localises to the cell outer membrane. Functionally, probably involved in polymerization and/or export of exopolysaccharide EPS I which functions as a virulence factor. The protein is EPS I polysaccharide export outer membrane protein EpsA (epsA) of Ralstonia solanacearum (Pseudomonas solanacearum).